Here is a 230-residue protein sequence, read N- to C-terminus: Small ribosomal subunit protein uS3 (230 aa).

In terms of domain architecture, KH type-2 spans 39–107; that stretch reads VREYLFKRLK…PVHINIEEVR (69 aa).

It belongs to the universal ribosomal protein uS3 family. Part of the 30S ribosomal subunit. Forms a tight complex with proteins S10 and S14.

Binds the lower part of the 30S subunit head. Binds mRNA in the 70S ribosome, positioning it for translation. This chain is Small ribosomal subunit protein uS3, found in Alcanivorax borkumensis (strain ATCC 700651 / DSM 11573 / NCIMB 13689 / SK2).